A 414-amino-acid chain; its full sequence is Protein phosphatase 2C homolog 3 (414 aa).

Residues 23–288 enclose the PPM-type phosphatase domain; sequence LYGLSSMQGW…DNMTVCIVAL (266 aa). Positions 62, 63, 230, and 279 each coordinate Mn(2+). Disordered regions lie at residues 313 to 368 and 380 to 414; these read APPE…TNGS and FPHK…SAAD. The span at 350–363 shows a compositional bias: basic and acidic residues; that stretch reads GYDKDANENSKEDD. The span at 390–400 shows a compositional bias: polar residues; the sequence is SSETDIVNSNK. A compositionally biased stretch (basic and acidic residues) spans 401 to 414; that stretch reads DVADDHKEAVSAAD.

The protein belongs to the PP2C family. As to quaternary structure, monomer. Mg(2+) serves as cofactor. Requires Mn(2+) as cofactor.

Its subcellular location is the cytoplasm. It is found in the nucleus. It carries out the reaction O-phospho-L-seryl-[protein] + H2O = L-seryl-[protein] + phosphate. It catalyses the reaction O-phospho-L-threonyl-[protein] + H2O = L-threonyl-[protein] + phosphate. In terms of biological role, dephosphorylating regulator for many key proteins. Has an important role in osmotic stability and cell shape control. It may negatively regulate the osmosensing signal transmitted through wis1 map kinase. The chain is Protein phosphatase 2C homolog 3 (ptc3) from Schizosaccharomyces pombe (strain 972 / ATCC 24843) (Fission yeast).